The primary structure comprises 433 residues: Protein CLP1 homolog (433 aa).

ATP contacts are provided by residues Glu-22, Arg-61, and Asp-128–Thr-133.

The protein belongs to the Clp1 family. Clp1 subfamily.

The protein resides in the nucleus. Functionally, required for endonucleolytic cleavage during polyadenylation-dependent pre-mRNA 3'-end formation. The sequence is that of Protein CLP1 homolog from Brugia malayi (Filarial nematode worm).